Consider the following 104-residue polypeptide: Glutaredoxin-C15 (104 aa).

One can recognise a Glutaredoxin domain in the interval 1-103; it reads MERVAKLSTE…PMLKAAGAIW (103 aa). An intrachain disulfide couples Cys21 to Cys24.

The protein belongs to the glutaredoxin family. CC-type subfamily.

It is found in the cytoplasm. In terms of biological role, has a glutathione-disulfide oxidoreductase activity in the presence of NADPH and glutathione reductase. Reduces low molecular weight disulfides and proteins. The sequence is that of Glutaredoxin-C15 (GRXC15) from Oryza sativa subsp. japonica (Rice).